The following is a 326-amino-acid chain: Glycerol-3-phosphate dehydrogenase [NAD(P)+] (326 aa).

NADPH is bound by residues Ser10, Phe11, Arg31, and Lys108. Sn-glycerol 3-phosphate is bound by residues Lys108, Gly136, and Ser138. Residue Ala140 participates in NADPH binding. The sn-glycerol 3-phosphate site is built by Lys191, Asp246, Ser256, Arg257, and Asn258. Lys191 (proton acceptor) is an active-site residue. Arg257 contacts NADPH. NADPH-binding residues include Ile281 and Glu283.

The protein belongs to the NAD-dependent glycerol-3-phosphate dehydrogenase family.

The protein resides in the cytoplasm. The enzyme catalyses sn-glycerol 3-phosphate + NAD(+) = dihydroxyacetone phosphate + NADH + H(+). The catalysed reaction is sn-glycerol 3-phosphate + NADP(+) = dihydroxyacetone phosphate + NADPH + H(+). It functions in the pathway membrane lipid metabolism; glycerophospholipid metabolism. Functionally, catalyzes the reduction of the glycolytic intermediate dihydroxyacetone phosphate (DHAP) to sn-glycerol 3-phosphate (G3P), the key precursor for phospholipid synthesis. In Ehrlichia chaffeensis (strain ATCC CRL-10679 / Arkansas), this protein is Glycerol-3-phosphate dehydrogenase [NAD(P)+].